A 250-amino-acid chain; its full sequence is Small ribosomal subunit protein uS3 (250 aa).

Residues 39-107 form the KH type-2 domain; it reads VREFLTKKLK…PAQVSINEID (69 aa). Positions 215–250 are disordered; sequence MNPAPAEERPAKRGRGRGEGQERRGRRGDRAADKGE. The span at 220 to 250 shows a compositional bias: basic and acidic residues; it reads AEERPAKRGRGRGEGQERRGRRGDRAADKGE.

The protein belongs to the universal ribosomal protein uS3 family. In terms of assembly, part of the 30S ribosomal subunit. Forms a tight complex with proteins S10 and S14.

In terms of biological role, binds the lower part of the 30S subunit head. Binds mRNA in the 70S ribosome, positioning it for translation. This is Small ribosomal subunit protein uS3 from Acinetobacter baumannii (strain SDF).